Reading from the N-terminus, the 330-residue chain is Neurogenic differentiation factor 4 (330 aa).

A disordered region spans residues 1–79 (MTKTYTKAKE…RGPKKKKMTK (79 aa)). Residues 25 to 35 (LSSKDELKAEN) are compositionally biased toward basic and acidic residues. The segment covering 52 to 64 (DSIEEEEEEEDDG) has biased composition (acidic residues). Over residues 67-79 (PKRRGPKKKKMTK) the composition is skewed to basic residues. The short motif at 73-79 (KKKKMTK) is the Nuclear localization signal element. The region spanning 87-139 (ARRVKANARERTRMHGLNDALDNLRRVMPCYSKTQKLSKIETLRLARNYIWAL) is the bHLH domain. Residues 162–183 (LSQPTSNLVAGCLQLGPQTLFL) form a leucine-zipper region.

In terms of assembly, efficient DNA binding requires dimerization with another bHLH protein. Post-translationally, serine or threonine phosphorylation within the basic region may regulate neurogenic activity. In terms of tissue distribution, expressed in both the developing central nervous system and peripheral nervous system.

It is found in the nucleus. In terms of biological role, probably acts as a transcriptional activator. Mediates neuronal differentiation. Required for the regulation of amacrine cell fate specification in the retina. This Gallus gallus (Chicken) protein is Neurogenic differentiation factor 4 (NEUROD4).